The following is a 262-amino-acid chain: UDP-2,3-diacylglucosamine hydrolase (262 aa).

D10, H12, D47, N86, H121, H218, and H220 together coordinate Mn(2+).

It belongs to the LpxH family. It depends on Mn(2+) as a cofactor.

The protein localises to the cell inner membrane. It localises to the cytoplasm. It catalyses the reaction UDP-2-N,3-O-bis[(3R)-3-hydroxytetradecanoyl]-alpha-D-glucosamine + H2O = 2-N,3-O-bis[(3R)-3-hydroxytetradecanoyl]-alpha-D-glucosaminyl 1-phosphate + UMP + 2 H(+). Its pathway is glycolipid biosynthesis; lipid IV(A) biosynthesis; lipid IV(A) from (3R)-3-hydroxytetradecanoyl-[acyl-carrier-protein] and UDP-N-acetyl-alpha-D-glucosamine: step 4/6. In terms of biological role, hydrolyzes the pyrophosphate bond of UDP-2,3-diacylglucosamine to yield 2,3-diacylglucosamine 1-phosphate (lipid X) and UMP by catalyzing the attack of water at the alpha-P atom. Involved in the biosynthesis of lipid A, a phosphorylated glycolipid that anchors the lipopolysaccharide to the outer membrane of the cell. The chain is UDP-2,3-diacylglucosamine hydrolase from Porphyromonas gingivalis (strain ATCC BAA-308 / W83).